The sequence spans 395 residues: Axin-like protein 1 (395 aa).

An RGS domain is found at 4-132 (RSKTFSDRIL…TTTADVSNTW (129 aa)). Residues 190–230 (QETKNSSETEEEKKKERSADPYGSDGFAPPPQSTQTHTLRN) form a disordered region. Over residues 194-208 (NSSETEEEKKKERSA) the composition is skewed to basic and acidic residues. The DIX domain occupies 301-386 (EIQKLTVELR…RITAICRMCP (86 aa)).

Interacts with bar-1, dsh-2, gsk-3, and mig-5.

In terms of biological role, works in parallel with pry-1 in negatively regulating bar-1 signaling in vulval precursor cells and Q neuroblasts. Shown to have a role in excretory cell development. This Caenorhabditis briggsae protein is Axin-like protein 1 (axl-1).